We begin with the raw amino-acid sequence, 239 residues long: 1-(5-phosphoribosyl)-5-[(5-phosphoribosylamino)methylideneamino] imidazole-4-carboxamide isomerase (239 aa).

Asp8 serves as the catalytic Proton acceptor. Catalysis depends on Asp129, which acts as the Proton donor.

Belongs to the HisA/HisF family.

The protein resides in the cytoplasm. It carries out the reaction 1-(5-phospho-beta-D-ribosyl)-5-[(5-phospho-beta-D-ribosylamino)methylideneamino]imidazole-4-carboxamide = 5-[(5-phospho-1-deoxy-D-ribulos-1-ylimino)methylamino]-1-(5-phospho-beta-D-ribosyl)imidazole-4-carboxamide. Its pathway is amino-acid biosynthesis; L-histidine biosynthesis; L-histidine from 5-phospho-alpha-D-ribose 1-diphosphate: step 4/9. The protein is 1-(5-phosphoribosyl)-5-[(5-phosphoribosylamino)methylideneamino] imidazole-4-carboxamide isomerase of Bacillus thuringiensis (strain Al Hakam).